The following is a 478-amino-acid chain: Adenosylhomocysteinase (478 aa).

Positions 57, 139, and 201 each coordinate substrate. 202–204 is a binding site for NAD(+); it reads TTT. The substrate site is built by Lys-231 and Asp-235. NAD(+) is bound by residues Asn-236, 265–270, Glu-288, Asn-323, 344–346, and Asn-392; these read GYGDVG and IGH.

This sequence belongs to the adenosylhomocysteinase family. NAD(+) serves as cofactor.

Its subcellular location is the cytoplasm. The catalysed reaction is S-adenosyl-L-homocysteine + H2O = L-homocysteine + adenosine. It functions in the pathway amino-acid biosynthesis; L-homocysteine biosynthesis; L-homocysteine from S-adenosyl-L-homocysteine: step 1/1. May play a key role in the regulation of the intracellular concentration of adenosylhomocysteine. The sequence is that of Adenosylhomocysteinase from Corynebacterium glutamicum (strain R).